Reading from the N-terminus, the 517-residue chain is UDP-N-acetylmuramyl-tripeptide synthetase (517 aa).

Ser38 serves as a coordination point for UDP-N-acetyl-alpha-D-muramoyl-L-alanyl-D-glutamate. 116 to 122 (GTKGKTT) contributes to the ATP binding site. Residues Asn160, 162-163 (TT), Ser189, and Arg197 contribute to the UDP-N-acetyl-alpha-D-muramoyl-L-alanyl-D-glutamate site. At Lys231 the chain carries N6-carboxylysine.

It belongs to the MurCDEF family. MurE subfamily. Post-translationally, carboxylation is probably crucial for Mg(2+) binding and, consequently, for the gamma-phosphate positioning of ATP.

It is found in the cytoplasm. Its pathway is cell wall biogenesis; peptidoglycan biosynthesis. In terms of biological role, catalyzes the addition of an amino acid to the nucleotide precursor UDP-N-acetylmuramoyl-L-alanyl-D-glutamate (UMAG) in the biosynthesis of bacterial cell-wall peptidoglycan. The protein is UDP-N-acetylmuramyl-tripeptide synthetase of Lacticaseibacillus paracasei (strain ATCC 334 / BCRC 17002 / CCUG 31169 / CIP 107868 / KCTC 3260 / NRRL B-441) (Lactobacillus paracasei).